Consider the following 635-residue polypeptide: GTPase-GDP dissociation stimulator vimar (635 aa).

ARM repeat units lie at residues 72–118, 346–391, 392–432, and 510–550; these read KSEV…NICY, TDSH…NLVI, PKPN…MTVD, and RSSL…ILSV.

As to quaternary structure, interacts with Miro.

The protein resides in the endoplasmic reticulum. It localises to the mitochondrion. Its subcellular location is the cytoplasm. The protein localises to the cytosol. In terms of biological role, probably acts as a GEF (guanine nucleotide exchange factor) for the Rho family of small GTP-binding proteins (G proteins) that stimulates the dissociation of GDP to enable subsequent binding of GTP. May also chaperone the processing and/or trafficking of small GTPases independently of GEF activity. By interacting with Miro, promotes mitochondrial fission in response to high calcium concentrations. This chain is GTPase-GDP dissociation stimulator vimar, found in Drosophila melanogaster (Fruit fly).